The following is a 756-amino-acid chain: Conserved oligomeric Golgi complex subunit 2 (756 aa).

Positions 62-82 (RSELRSHLASLNRELVDLINR) form a coiled coil. Residues 173–199 (WQNEDANSMGRSSMNDENSTQQDGTTM) form a disordered region.

The protein belongs to the COG2 family. In terms of assembly, homodimer. Component of the conserved oligomeric Golgi complex which is composed of eight different subunits and is required for normal Golgi morphology and localization. Binds to COG3 and COG4. Interacts with FPP3/VETH1 and FPP2/VETH2; this interaction promotes the association between cortical microtubules and EXO70A1. Binds to SEC15B, and, possibly, with EXO70A1, SEC3A and SEC10A.

Its subcellular location is the golgi apparatus membrane. Required for normal Golgi morphology and function. Ensures, when in complex with FPP3/VETH1 and FPP2/VETH2, the correct secondary cell wall (SCW) deposition pattern by recruiting exocyst components to cortical microtubules in xylem cells during secondary cell wall deposition. The polypeptide is Conserved oligomeric Golgi complex subunit 2 (Arabidopsis thaliana (Mouse-ear cress)).